A 542-amino-acid chain; its full sequence is Cytochrome P450 monooxygenase 91 (542 aa).

Positions 1 to 22 (MLDILRFVLICGILWILRRVLL) are cleaved as a signal peptide. N-linked (GlcNAc...) asparagine glycans are attached at residues Asn299 and Asn392. Position 482 (Cys482) interacts with heme.

The protein belongs to the cytochrome P450 family. Requires heme as cofactor.

It participates in secondary metabolite biosynthesis. Cytochrome P450 monooxygenase that is able to use dehydroabietic acid as a substrate for oxidation. In Postia placenta (strain ATCC 44394 / Madison 698-R) (Brown rot fungus), this protein is Cytochrome P450 monooxygenase 91.